A 1116-amino-acid chain; its full sequence is Auxin response factor 21 (1116 aa).

Positions 132-234 form a DNA-binding region, TF-B3; the sequence is FCKTLTASDT…QLLLGIRRAN (103 aa). Positions 763–812 are disordered; the sequence is KTDDVPSTSTSPSTNSNPVLLQSIPSSSKNQSLTTAGKTSQSSVVLGPTI. Low complexity predominate over residues 768–780; it reads PSTSTSPSTNSNP. Over residues 781–806 the composition is skewed to polar residues; that stretch reads VLLQSIPSSSKNQSLTTAGKTSQSSV. The 85-residue stretch at 998–1082 folds into the PB1 domain; sequence RTYTKVHKRG…RCIRILSPQE (85 aa).

The protein belongs to the ARF family. In terms of assembly, homodimers and heterodimers. As to expression, expressed in roots, culms, leaves and young panicles.

The protein resides in the nucleus. Auxin response factors (ARFs) are transcriptional factors that bind specifically to the DNA sequence 5'-TGTCTC-3' found in the auxin-responsive promoter elements (AuxREs). The polypeptide is Auxin response factor 21 (ARF21) (Oryza sativa subsp. japonica (Rice)).